Here is a 787-residue protein sequence, read N- to C-terminus: Integrin beta-6 (787 aa).

Residues 1-21 (MGIELVCLFLLLLGRNDHVQG) form the signal peptide. In terms of domain architecture, PSI spans 22–71 (GCAWSGAETCSDCLLTGPHCAWCSQENFTHLSGAGERCDTPENLLAKGCQ). At 22-708 (GCAWSGAETC…KDCPKPPNIP (687 aa)) the chain is on the extracellular side. Cystine bridges form between Cys23/Cys41, Cys31/Cys454, Cys34/Cys59, Cys44/Cys70, Cys197/Cys204, Cys252/Cys293, Cys394/Cys406, Cys426/Cys452, Cys456/Cys476, Cys467/Cys479, Cys481/Cys490, Cys492/Cys519, Cys502/Cys517, Cys511/Cys522, Cys524/Cys537, Cys539/Cys560, Cys544/Cys558, Cys552/Cys563, and Cys565/Cys574. N-linked (GlcNAc...) asparagine glycosylation is found at Asn48 and Asn97. A VWFA domain is found at 131–371 (YPVDLYYLMD…QLIISAYEEL (241 aa)). Positions 140, 142, and 144 each coordinate Mg(2+). Ca(2+) is bound by residues Ser144, Asp147, Asp148, and Glu179. 4 residues coordinate Ca(2+): Asn235, Asp237, Pro239, and Glu240. Glu240 contacts Mg(2+). Residue Asn260 is glycosylated (N-linked (GlcNAc...) asparagine). Ca(2+)-binding residues include Asp271 and Lys355. N-linked (GlcNAc...) asparagine glycosylation occurs at Asn387. N-linked (GlcNAc...) asparagine glycosylation is present at Asn418. I-EGF domains follow at residues 456–491 (CQRE…PRCE), 492–538 (CGED…PYCQ), 539–575 (CDNF…EYCN), and 576–615 (CTTS…PTCE). N-linked (GlcNAc...) asparagine glycans are attached at residues Asn463 and Asn471. Residue Asn541 is glycosylated (N-linked (GlcNAc...) asparagine). N-linked (GlcNAc...) asparagine glycosylation occurs at Asn575. Intrachain disulfides connect Cys576/Cys599, Cys583/Cys597, Cys591/Cys602, Cys604/Cys614, Cys617/Cys620, Cys624/Cys669, Cys630/Cys649, Cys633/Cys645, and Cys677/Cys701. An N-linked (GlcNAc...) asparagine glycan is attached at Asn695. A helical membrane pass occupies residues 709–729 (MIMLGVSLAILLIGVVLLCIW). The interaction with HAX1 stretch occupies residues 730–757 (KLLVSFHDRKEVAKFEAERSKAKWQTGT). Residues 730–787 (KLLVSFHDRKEVAKFEAERSKAKWQTGTNPLYRGSTSTFKNVTYKHREKHKVGLSSDG) lie on the Cytoplasmic side of the membrane.

It belongs to the integrin beta chain family. As to quaternary structure, heterodimer of an alpha and a beta subunit. Interacts with FLNB. Interacts with HAX1. ITGAV:ITGB6 interacts with FBN1. ITGAV:ITGB6 interacts with TGFB1.

Its subcellular location is the cell membrane. It is found in the cell junction. The protein resides in the focal adhesion. In terms of biological role, integrin alpha-V:beta-6 (ITGAV:ITGB6) is a receptor for fibronectin and cytotactin. It recognizes the sequence R-G-D in its ligands. ITGAV:ITGB6 acts as a receptor for fibrillin-1 (FBN1) and mediates R-G-D-dependent cell adhesion to FBN1. Integrin alpha-V:beta-6 (ITGAV:ITGB6) mediates R-G-D-dependent release of transforming growth factor beta-1 (TGF-beta-1) from regulatory Latency-associated peptide (LAP), thereby playing a key role in TGF-beta-1 activation. The protein is Integrin beta-6 (Itgb6) of Rattus norvegicus (Rat).